We begin with the raw amino-acid sequence, 96 residues long: Conantokin Rl-C (96 aa).

Positions 1 to 21 (MQLYTYLYLLVPLVTFHLILG) are cleaved as a signal peptide. The propeptide occupies 22-78 (TGTLDHGDALTERRSADATALKPEPVLLQKSSARSTDDNGKDTQMKRIFKKRRNKAR). Positions 36-85 (SADATALKPEPVLLQKSSARSTDDNGKDTQMKRIFKKRRNKARGEEELSE) are disordered. Over residues 56–66 (STDDNGKDTQM) the composition is skewed to basic and acidic residues. Residue E81 coordinates a divalent metal cation. 4-carboxyglutamate is present on residues E81, E82, E85, E89, and E93. Residues E85, E89, and E93 each contribute to the a divalent metal cation site. At N96 the chain carries Asparagine amide.

Belongs to the conotoxin B superfamily. Requires Ca(2+) as cofactor. Mg(2+) is required as a cofactor. As to expression, expressed by the venom duct.

Its subcellular location is the secreted. Its function is as follows. Conantokins inhibit N-methyl-D-aspartate (NMDA) receptors. This toxin has antagonist activity on NR2B/GRIN2B (IC(50)=1.4 uM) and NR2A/GRIN2A (IC(50)=2.9 uM) subunits, when tested on rat receptors. The polypeptide is Conantokin Rl-C (Conus rolani (Cone snail)).